A 68-amino-acid polypeptide reads, in one-letter code: Disintegrin EMF10B (68 aa).

A Disintegrin domain is found at 1–68 (ELLQNSGNPC…SDCPRNPVFK (68 aa)). 4 cysteine pairs are disulfide-bonded: cysteine 10-cysteine 33, cysteine 24-cysteine 30, cysteine 29-cysteine 54, and cysteine 42-cysteine 61. Positions 46–48 (MGD) match the Cell attachment site; atypical (MGD) motif.

This sequence belongs to the venom metalloproteinase (M12B) family. P-II subfamily. P-IIe sub-subfamily. In terms of assembly, heterodimer with EMF10A; disulfide-linked. As to expression, expressed by the venom gland.

The protein resides in the secreted. In terms of biological role, extremely potent and selective inhibitor of integrin alpha-5/beta-1 (ITGA5/ITGB1). Partially inhibits adhesion of cells expressing alpha-IIb/beta-3 (ITGA2B/ITGB3), alpha-V/beta-3 (ITGAV/ITGB3), and alpha-4/beta-1 (ITGA4/ITGB1) to appropriate ligands only at concentration higher than 500 nM. Weakly inhibits ADP-induced platelet aggregation. The chain is Disintegrin EMF10B from Eristicophis macmahoni (Leaf-nosed viper).